The chain runs to 393 residues: MTNSNRIKLTWISFLSYALTGALVIVTGMVMGNIADYFNLPVSSMSNTFTFLNAGILISIFLNAWLMEIVPLKTQLRFGFLLMVLAVAGLMFSHSLALFSTAMFILGVVSGITMSIGTFLITQMYEGRQRGSRLLFTDSFFSMAGMIFPMIAAFLLARSIEWYWVYACIGLVYVAIFILTFGCEFPALGKHAPKTDAPVEKEKWGIGVLFLSVAALCYILGQLGFISWVPEYAKGLGMSLNDAGTLVSNFWMSYMVGMWAFSFILRFFDLQRILTVLAGLAAILMYVFNTGTPAHMAWSILALGFFSSAIYTTIITLGSQQTKVPSPKLVNFVLTCGTIGTMLTFVVTGPIVEHSGPQAALLTANGLYAVVFVMCFLLGFVSRHRQHNTLTSH.

The next 12 membrane-spanning stretches (helical) occupy residues 11 to 31 (WISF…GMVM), 51 to 71 (FLNA…EIVP), 78 to 98 (FGFL…SLAL), 101 to 121 (TAMF…TFLI), 134 to 154 (LLFT…IAAF), 162 to 182 (WYWV…LTFG), 206 to 226 (IGVL…LGFI), 245 to 265 (TLVS…SFIL), 273 to 293 (ILTV…TGTP), 297 to 317 (AWSI…IITL), 332 to 352 (FVLT…GPIV), and 361 to 381 (LLTA…LGFV).

It belongs to the major facilitator superfamily. TsgA family.

Its subcellular location is the cell inner membrane. This is Protein TsgA from Shigella boydii serotype 4 (strain Sb227).